A 676-amino-acid chain; its full sequence is Beta-galactosidase BgaP (676 aa).

Residue Arg112 participates in substrate binding. A Zn(2+)-binding site is contributed by Cys116. Residue Asn150 coordinates substrate. The Proton donor role is filled by Glu151. Cys156, Cys158, and Cys161 together coordinate Zn(2+). Glu308 acts as the Nucleophile in catalysis. Substrate is bound by residues Trp316 and 356-359 (EKYH).

Belongs to the glycosyl hydrolase 42 family. As to quaternary structure, homodimer.

It carries out the reaction Hydrolysis of terminal non-reducing beta-D-galactose residues in beta-D-galactosides.. With respect to regulation, no activity lost during treatment with 100 mM EDTA after 2 hours, and the addition of 1 mM MgCl(2), 1 mM CaCl(2) or 1 mM MnCl(2) has no effect. However, the enzyme activity is inhibited by Zn(2+), Cu(2+), Ni(2+) and Co(2+) to different extents. Addition of Na(+) or K(+) slightly stimulates the enzyme activity at low concentrations and the optimal concentration is 250 mM. A further increase of their concentration of ions above the optimum value results in a decrease in enzyme activity. The enzyme is still active even in the presence of Na(+) or K(+) at a concentration up to 5 M. In terms of biological role, hydrolyzes lactose, o-nitrophenyl-beta-D-galactopyranoside (ONPG), p-nitrophenyl-beta-D-galactopyranoside (PNPG), 5-bromo-4-chloro-3-indolyl-beta-D-galactopyranoside (X-gal), o-nitrophenyl-beta-D-fucopyranoside, p-nitrophenyl-beta-D-mannoside, o-nitrophenyl-beta-D-glucoside, p-nitrophenyl-beta-D-xyloside, p-nitrophenyl-beta-D-cellobioside, p-nitrophenyl-beta-D-arabinoside, p-nitrophenyl-beta-D-lactoside, p-nitrophenyl-beta-D-galacturonide, p-nitrophenyl-beta-D-glucuronide and p-nitrophenyl-alpha-D-galactoside with highest level of activity with ONPG as substrate, intermediate level of activity with PNPG and lower levels of activity with all other chromogenic nitrophenyl analogs. Able to hydrolyze 34% of milk lactose after 60 minutes at 5 degrees Celsius. The chain is Beta-galactosidase BgaP from Planococcus sp. (strain L4).